Consider the following 195-residue polypeptide: ATP-dependent Clp protease proteolytic subunit (195 aa).

The active-site Nucleophile is serine 96. The active site involves histidine 121.

It belongs to the peptidase S14 family. As to quaternary structure, fourteen ClpP subunits assemble into 2 heptameric rings which stack back to back to give a disk-like structure with a central cavity, resembling the structure of eukaryotic proteasomes.

It localises to the cytoplasm. It carries out the reaction Hydrolysis of proteins to small peptides in the presence of ATP and magnesium. alpha-casein is the usual test substrate. In the absence of ATP, only oligopeptides shorter than five residues are hydrolyzed (such as succinyl-Leu-Tyr-|-NHMec, and Leu-Tyr-Leu-|-Tyr-Trp, in which cleavage of the -Tyr-|-Leu- and -Tyr-|-Trp bonds also occurs).. In terms of biological role, cleaves peptides in various proteins in a process that requires ATP hydrolysis. Has a chymotrypsin-like activity. Plays a major role in the degradation of misfolded proteins. This is ATP-dependent Clp protease proteolytic subunit from Elusimicrobium minutum (strain Pei191).